Reading from the N-terminus, the 200-residue chain is 3-isopropylmalate dehydratase small subunit (200 aa).

It belongs to the LeuD family. LeuD type 1 subfamily. As to quaternary structure, heterodimer of LeuC and LeuD.

It carries out the reaction (2R,3S)-3-isopropylmalate = (2S)-2-isopropylmalate. It functions in the pathway amino-acid biosynthesis; L-leucine biosynthesis; L-leucine from 3-methyl-2-oxobutanoate: step 2/4. In terms of biological role, catalyzes the isomerization between 2-isopropylmalate and 3-isopropylmalate, via the formation of 2-isopropylmaleate. This chain is 3-isopropylmalate dehydratase small subunit, found in Vibrio campbellii (strain ATCC BAA-1116).